The sequence spans 303 residues: Ribosomal RNA small subunit methyltransferase A (303 aa).

Asn-37, Val-39, Gly-64, Glu-85, Asp-115, and Asn-138 together coordinate S-adenosyl-L-methionine.

The protein belongs to the class I-like SAM-binding methyltransferase superfamily. rRNA adenine N(6)-methyltransferase family. RsmA subfamily.

The protein resides in the cytoplasm. The catalysed reaction is adenosine(1518)/adenosine(1519) in 16S rRNA + 4 S-adenosyl-L-methionine = N(6)-dimethyladenosine(1518)/N(6)-dimethyladenosine(1519) in 16S rRNA + 4 S-adenosyl-L-homocysteine + 4 H(+). Its function is as follows. Specifically dimethylates two adjacent adenosines (A1518 and A1519) in the loop of a conserved hairpin near the 3'-end of 16S rRNA in the 30S particle. May play a critical role in biogenesis of 30S subunits. This is Ribosomal RNA small subunit methyltransferase A from Bifidobacterium adolescentis (strain ATCC 15703 / DSM 20083 / NCTC 11814 / E194a).